Reading from the N-terminus, the 141-residue chain is Large ribosomal subunit protein uL13 (141 aa).

Belongs to the universal ribosomal protein uL13 family. Part of the 50S ribosomal subunit.

Its function is as follows. This protein is one of the early assembly proteins of the 50S ribosomal subunit, although it is not seen to bind rRNA by itself. It is important during the early stages of 50S assembly. This Sulfurovum sp. (strain NBC37-1) protein is Large ribosomal subunit protein uL13.